The primary structure comprises 218 residues: Small ribosomal subunit protein uS3 (218 aa).

The 69-residue stretch at 38–106 (IREYISKRLS…RVHINILEIK (69 aa)) folds into the KH type-2 domain.

This sequence belongs to the universal ribosomal protein uS3 family. In terms of assembly, part of the 30S ribosomal subunit. Forms a tight complex with proteins S10 and S14.

Functionally, binds the lower part of the 30S subunit head. Binds mRNA in the 70S ribosome, positioning it for translation. This is Small ribosomal subunit protein uS3 from Bacillus subtilis (strain 168).